The chain runs to 121 residues: Large ribosomal subunit protein uL14 (121 aa).

The protein belongs to the universal ribosomal protein uL14 family. Part of the 50S ribosomal subunit. Forms a cluster with proteins L3 and L19. In the 70S ribosome, L14 and L19 interact and together make contacts with the 16S rRNA in bridges B5 and B8.

Its function is as follows. Binds to 23S rRNA. Forms part of two intersubunit bridges in the 70S ribosome. This Porphyromonas gingivalis (strain ATCC 33277 / DSM 20709 / CIP 103683 / JCM 12257 / NCTC 11834 / 2561) protein is Large ribosomal subunit protein uL14.